Consider the following 159-residue polypeptide: MRVGCGYDSHRWAAKRKLILGGVEIPHEFGLTGHSDADALTHAICDALLGAISEGDIGFQFPDSDPAYSGISSLKLLSKILEMVDKKGFAIDYIDSTVIMERPKLMPYIPDMKSKIAGVLKMPSDRINIKAKTNEGMGFVGRQEGVAVFAVALVKENQD.

The a divalent metal cation site is built by D8 and H10. 4-CDP-2-C-methyl-D-erythritol 2-phosphate is bound by residues 8-10 and 34-35; these read DSH and HS. H42 contacts a divalent metal cation. 4-CDP-2-C-methyl-D-erythritol 2-phosphate is bound by residues 56–58, 61–65, F139, and R142; these read DIG and FPDSD.

It belongs to the IspF family. Homotrimer. A divalent metal cation serves as cofactor.

The enzyme catalyses 4-CDP-2-C-methyl-D-erythritol 2-phosphate = 2-C-methyl-D-erythritol 2,4-cyclic diphosphate + CMP. Its pathway is isoprenoid biosynthesis; isopentenyl diphosphate biosynthesis via DXP pathway; isopentenyl diphosphate from 1-deoxy-D-xylulose 5-phosphate: step 4/6. Functionally, involved in the biosynthesis of isopentenyl diphosphate (IPP) and dimethylallyl diphosphate (DMAPP), two major building blocks of isoprenoid compounds. Catalyzes the conversion of 4-diphosphocytidyl-2-C-methyl-D-erythritol 2-phosphate (CDP-ME2P) to 2-C-methyl-D-erythritol 2,4-cyclodiphosphate (ME-CPP) with a corresponding release of cytidine 5-monophosphate (CMP). The chain is 2-C-methyl-D-erythritol 2,4-cyclodiphosphate synthase from Syntrophus aciditrophicus (strain SB).